We begin with the raw amino-acid sequence, 325 residues long: Lipoyl synthase (325 aa).

A disordered region spans residues 1 to 33; the sequence is MATVIDTLKARGSEDRAARHPEKQNRPDTPVLR. Over residues 8 to 33 the composition is skewed to basic and acidic residues; it reads LKARGSEDRAARHPEKQNRPDTPVLR. [4Fe-4S] cluster is bound by residues Cys64, Cys69, Cys75, Cys90, Cys94, Cys97, and Ser303. The Radical SAM core domain occupies 76-292; that stretch reads WSQKHATMMI…EAIARAKGFL (217 aa).

Belongs to the radical SAM superfamily. Lipoyl synthase family. [4Fe-4S] cluster is required as a cofactor.

The protein localises to the cytoplasm. The enzyme catalyses [[Fe-S] cluster scaffold protein carrying a second [4Fe-4S](2+) cluster] + N(6)-octanoyl-L-lysyl-[protein] + 2 oxidized [2Fe-2S]-[ferredoxin] + 2 S-adenosyl-L-methionine + 4 H(+) = [[Fe-S] cluster scaffold protein] + N(6)-[(R)-dihydrolipoyl]-L-lysyl-[protein] + 4 Fe(3+) + 2 hydrogen sulfide + 2 5'-deoxyadenosine + 2 L-methionine + 2 reduced [2Fe-2S]-[ferredoxin]. It participates in protein modification; protein lipoylation via endogenous pathway; protein N(6)-(lipoyl)lysine from octanoyl-[acyl-carrier-protein]: step 2/2. Functionally, catalyzes the radical-mediated insertion of two sulfur atoms into the C-6 and C-8 positions of the octanoyl moiety bound to the lipoyl domains of lipoate-dependent enzymes, thereby converting the octanoylated domains into lipoylated derivatives. In Caulobacter vibrioides (strain ATCC 19089 / CIP 103742 / CB 15) (Caulobacter crescentus), this protein is Lipoyl synthase.